Here is a 353-residue protein sequence, read N- to C-terminus: Histidinol-phosphate aminotransferase 1 (353 aa).

Position 211 is an N6-(pyridoxal phosphate)lysine (K211).

The protein belongs to the class-II pyridoxal-phosphate-dependent aminotransferase family. Histidinol-phosphate aminotransferase subfamily. In terms of assembly, homodimer. The cofactor is pyridoxal 5'-phosphate.

The enzyme catalyses L-histidinol phosphate + 2-oxoglutarate = 3-(imidazol-4-yl)-2-oxopropyl phosphate + L-glutamate. It functions in the pathway amino-acid biosynthesis; L-histidine biosynthesis; L-histidine from 5-phospho-alpha-D-ribose 1-diphosphate: step 7/9. This chain is Histidinol-phosphate aminotransferase 1 (hisC1), found in Nostoc sp. (strain PCC 7120 / SAG 25.82 / UTEX 2576).